The primary structure comprises 263 residues: uncharacterized protein (263 aa).

31–38 (GPTGSGKT) is a binding site for ATP.

Belongs to the CbbQ/NirQ/NorQ/GpvN family.

This is an uncharacterized protein from Staphylococcus haemolyticus (strain JCSC1435).